Reading from the N-terminus, the 457-residue chain is ATP synthase subunit beta (457 aa).

ATP is bound at residue Gly-147 to Thr-154.

Belongs to the ATPase alpha/beta chains family. As to quaternary structure, F-type ATPases have 2 components, CF(1) - the catalytic core - and CF(0) - the membrane proton channel. CF(1) has five subunits: alpha(3), beta(3), gamma(1), delta(1), epsilon(1). CF(0) has three main subunits: a(1), b(2) and c(9-12). The alpha and beta chains form an alternating ring which encloses part of the gamma chain. CF(1) is attached to CF(0) by a central stalk formed by the gamma and epsilon chains, while a peripheral stalk is formed by the delta and b chains.

It is found in the cell inner membrane. The enzyme catalyses ATP + H2O + 4 H(+)(in) = ADP + phosphate + 5 H(+)(out). In terms of biological role, produces ATP from ADP in the presence of a proton gradient across the membrane. The catalytic sites are hosted primarily by the beta subunits. This Glaesserella parasuis serovar 5 (strain SH0165) (Haemophilus parasuis) protein is ATP synthase subunit beta.